The following is a 541-amino-acid chain: MTRDTNSNVGRRSVLKAASALGAFLGLGGVASATPGREPGPKKDEIIVGVSERVSSTEATVESKIPTNAEIVHTNETLGYVAVKFPSNAAEQARENFKRNVLQEDDIEYAEDNATYETLEVPNDPMYGQQYAPQQVNCEGAWAETYGDDDVVISVVDQGIQYDHENLAENMDGSVSDYGYDFVDDDGDPYPVSAGENHGTHVGGIAAGGTNNDTGHAGISNCSMLSARALGDGGGGSLSDIADAIQWSADQGADIINMSLGGGGFSETLDNACQYAYDEGTLLVAAAGNDHGGSVSYPAAYDSVMAVSSLDEGETLSSFSNVGPEIELAAPGGNVLSAVNWDDYDSLSGTSMASPVAAGVAGLALSAHPGLSNDELRDHLHDTAVDIGLSDDEQGYGRVDAELAVTTDPDNGDDDDDDDDDEDDPGDGECGDETNTATADGELSGGWGGNPSDTYSYELSTDNPCHATVTLDGPSSGATFDLFLTLDGRTPTTSDYDRRSYNWGADEEIEVDLDGDEELGILVDRYDGSGSYTLTIEELGS.

A signal peptide (tat-type signal) is located at residues 1–33; sequence MTRDTNSNVGRRSVLKAASALGAFLGLGGVASA. A propeptide spanning residues 34 to 121 is cleaved from the precursor; the sequence is TPGREPGPKK…DNATYETLEV (88 aa). In terms of domain architecture, Peptidase S8 spans 130-405; the sequence is QYAPQQVNCE…YGRVDAELAV (276 aa). Residues Asp-157, His-198, and Ser-351 each act as charge relay system in the active site. The tract at residues 403–453 is disordered; it reads LAVTTDPDNGDDDDDDDDDEDDPGDGECGDETNTATADGELSGGWGGNPSD. Acidic residues predominate over residues 410–432; the sequence is DNGDDDDDDDDDEDDPGDGECGD.

The protein belongs to the peptidase S8 family. As to quaternary structure, monomer. Post-translationally, exported by the Tat system. The position of the signal peptide cleavage has not been experimentally proven. After transport across the membrane, the propeptide is probably processed autocatalytically, yielding the mature fully active protease.

It localises to the secreted. Its activity is regulated as follows. Dependent on high salt concentrations for activity and stability. Strongly inhibited by the serine protease inhibitors diisopropyl fluorophosphate (DFP), phenylmethyl sulfonylfluoride (PMSF) and chymostatin. Also inhibited by denaturing agents such as SDS, urea, and HCl guanidinium. Activated by thiol-containing reducing agents such as dithiotreitol (DTT) and 2-mercaptoethanol. Its function is as follows. Serine protease that hydrolyzes large proteins such as casein and gelatin. Cleaves preferentially at the carboxyl terminus of Phe, Tyr or Leu. Is also able to catalyze peptide synthesis under different salt concentrations in the presence of dimethyl sulfoxide (DMSO). This is Halolysin-like extracellular serine protease Nep from Natrialba magadii.